The sequence spans 246 residues: Flavin-dependent thymidylate synthase (246 aa).

A ThyX domain is found at Val17–Asn241. FAD-binding positions include Ser69, Arg92–Arg94, and Glu101. DUMP is bound by residues Glu89 to Arg92, Glu101 to Arg105, and Arg173. Positions Arg92 to Ser103 match the ThyX motif motif. Residues Asn189–Arg191 and His195 contribute to the FAD site. Residue Arg200 participates in dUMP binding. Catalysis depends on Arg200, which acts as the Involved in ionization of N3 of dUMP, leading to its activation.

It belongs to the thymidylate synthase ThyX family. As to quaternary structure, homotetramer. FAD serves as cofactor.

It catalyses the reaction dUMP + (6R)-5,10-methylene-5,6,7,8-tetrahydrofolate + NADPH + H(+) = dTMP + (6S)-5,6,7,8-tetrahydrofolate + NADP(+). Its pathway is pyrimidine metabolism; dTTP biosynthesis. Functionally, catalyzes the reductive methylation of 2'-deoxyuridine-5'-monophosphate (dUMP) to 2'-deoxythymidine-5'-monophosphate (dTMP) while utilizing 5,10-methylenetetrahydrofolate (mTHF) as the methyl donor, and NADPH and FADH(2) as the reductant. The chain is Flavin-dependent thymidylate synthase from Streptomyces avermitilis (strain ATCC 31267 / DSM 46492 / JCM 5070 / NBRC 14893 / NCIMB 12804 / NRRL 8165 / MA-4680).